Here is a 201-residue protein sequence, read N- to C-terminus: uncharacterized protein (201 aa).

Residues 1–25 form the signal peptide; sequence MYRAGVTLLVVAVVSLGRWDVVTMA. Residues 26–170 are Extracellular-facing; the sequence is AAIGIGWYEP…AYFRRSNHRA (145 aa). Residues Asn-46, Asn-49, Asn-55, Asn-84, Asn-95, Asn-113, Asn-122, Asn-137, and Asn-144 are each glycosylated (N-linked (GlcNAc...) asparagine; by host). The helical transmembrane segment at 171 to 191 threads the bilayer; sequence FMIVILTQVVFVVFIINASFI. Over 192-201 the chain is Cytoplasmic; sequence WSWTFRRHKR.

Belongs to the HHV-5 UL120 protein family.

The protein localises to the host membrane. This is an uncharacterized protein from Homo sapiens (Human).